Here is a 354-residue protein sequence, read N- to C-terminus: Ornithine transcarbamylase, mitochondrial (354 aa).

A mitochondrion-targeting transit peptide spans 1-32 (MLFNLKNLYRITKLTQNSKHLPRHFCRGPPNQ). Residues 90–94 (STRTR), Arg-141, and His-168 contribute to the carbamoyl phosphate site. Arg-141 provides a ligand contact to L-ornithine. L-ornithine-binding positions include Asn-199, 263-267 (DTWIS), 302-305 (HCLP), and Arg-330. The active site involves Cys-303. Arg-330 lines the carbamoyl phosphate pocket.

The protein belongs to the aspartate/ornithine carbamoyltransferase superfamily. OTCase family. As to quaternary structure, homotrimer. Post-translationally, cleavage of the precursor form to the active form occurs only in the kidney. Expressed in kidney, brain, heart, liver, pancreas, gizzard, small intestine and breast muscle. More abundant in mitochondrion-rich organs (heart, liver and brain) than in other organs. Activity is only detected in the kidney.

It localises to the mitochondrion matrix. The catalysed reaction is carbamoyl phosphate + L-ornithine = L-citrulline + phosphate + H(+). It participates in nitrogen metabolism; urea cycle; L-citrulline from L-ornithine and carbamoyl phosphate: step 1/1. Its activity is regulated as follows. Inhibition by ornithine increases at higher pH. Functionally, catalyzes the second step of the urea cycle, the condensation of carbamoyl phosphate with L-ornithine to form L-citrulline. The urea cycle ensures the detoxification of ammonia by converting it to urea for excretion. This chain is Ornithine transcarbamylase, mitochondrial, found in Gallus gallus (Chicken).